The chain runs to 288 residues: Bifunctional protein FolD (288 aa).

NADP(+)-binding positions include 164 to 166 (GRS) and Val-230.

It belongs to the tetrahydrofolate dehydrogenase/cyclohydrolase family. In terms of assembly, homodimer.

It carries out the reaction (6R)-5,10-methylene-5,6,7,8-tetrahydrofolate + NADP(+) = (6R)-5,10-methenyltetrahydrofolate + NADPH. The enzyme catalyses (6R)-5,10-methenyltetrahydrofolate + H2O = (6R)-10-formyltetrahydrofolate + H(+). It functions in the pathway one-carbon metabolism; tetrahydrofolate interconversion. Catalyzes the oxidation of 5,10-methylenetetrahydrofolate to 5,10-methenyltetrahydrofolate and then the hydrolysis of 5,10-methenyltetrahydrofolate to 10-formyltetrahydrofolate. The polypeptide is Bifunctional protein FolD (Thermomicrobium roseum (strain ATCC 27502 / DSM 5159 / P-2)).